The following is a 118-amino-acid chain: Mitochondrial import inner membrane translocase subunit Tim10 B (118 aa).

The Twin CX3C motif motif lies at 31–55 (CFQRCVPSLHHRALDAEEEACLHSC). 2 disulfide bridges follow: Cys31/Cys55 and Cys35/Cys51. The interval 89–118 (SAVPHATAEQLETSPSRSLPSGNLGKGGAG) is disordered. Over residues 98–109 (QLETSPSRSLPS) the composition is skewed to polar residues.

The protein belongs to the small Tim family. Component of the TIM22 complex, which core is composed of TIMM22, associated with TIMM10 (TIMM10A and/or TIMM10B), TIMM9, AGK and TIMM29.

The protein localises to the mitochondrion inner membrane. In terms of biological role, component of the TIM22 complex, a complex that mediates the import and insertion of multi-pass transmembrane proteins into the mitochondrial inner membrane. The TIM22 complex forms a twin-pore translocase that uses the membrane potential as the external driving force. In the TIM22 complex, it may act as a docking point for the soluble 70 kDa complex that guides the target proteins in transit through the aqueous mitochondrial intermembrane space. This is Mitochondrial import inner membrane translocase subunit Tim10 B (TIMM10B) from Bos taurus (Bovine).